The following is a 202-amino-acid chain: ATP-dependent Clp protease proteolytic subunit (202 aa).

The Nucleophile role is filled by serine 101. Residue histidine 126 is part of the active site.

Belongs to the peptidase S14 family. Component of the chloroplastic Clp protease core complex.

It localises to the plastid. The protein localises to the chloroplast stroma. It carries out the reaction Hydrolysis of proteins to small peptides in the presence of ATP and magnesium. alpha-casein is the usual test substrate. In the absence of ATP, only oligopeptides shorter than five residues are hydrolyzed (such as succinyl-Leu-Tyr-|-NHMec, and Leu-Tyr-Leu-|-Tyr-Trp, in which cleavage of the -Tyr-|-Leu- and -Tyr-|-Trp bonds also occurs).. Functionally, cleaves peptides in various proteins in a process that requires ATP hydrolysis. Has a chymotrypsin-like activity. Plays a major role in the degradation of misfolded proteins. This is ATP-dependent Clp protease proteolytic subunit from Calycanthus floridus var. glaucus (Eastern sweetshrub).